The chain runs to 229 residues: Protein FAM3C (229 aa).

The N-terminal stretch at 1–24 (MRIAGAIKFVIAVALFLLTFYVIS) is a signal peptide. Disulfide bonds link C59–C87 and C65–C222. One can recognise a GG-type lectin domain in the interval 68-226 (KHFAFKIASG…VEMEGCIPQK (159 aa)).

It belongs to the FAM3 family.

Its subcellular location is the secreted. Functionally, involved in retinal laminar formation. The polypeptide is Protein FAM3C (fam3c) (Xenopus tropicalis (Western clawed frog)).